Here is a 175-residue protein sequence, read N- to C-terminus: Shikimate kinase (175 aa).

11-16 lines the ATP pocket; sequence GAGKTT. T15 contacts Mg(2+). Substrate-binding residues include D33, R57, and G79. R118 provides a ligand contact to ATP. Residue R140 participates in substrate binding.

Belongs to the shikimate kinase family. In terms of assembly, monomer. Mg(2+) serves as cofactor.

The protein localises to the cytoplasm. The enzyme catalyses shikimate + ATP = 3-phosphoshikimate + ADP + H(+). It participates in metabolic intermediate biosynthesis; chorismate biosynthesis; chorismate from D-erythrose 4-phosphate and phosphoenolpyruvate: step 5/7. In terms of biological role, catalyzes the specific phosphorylation of the 3-hydroxyl group of shikimic acid using ATP as a cosubstrate. The sequence is that of Shikimate kinase from Phocaeicola vulgatus (strain ATCC 8482 / DSM 1447 / JCM 5826 / CCUG 4940 / NBRC 14291 / NCTC 11154) (Bacteroides vulgatus).